A 599-amino-acid chain; its full sequence is NADH-quinone oxidoreductase subunit C/D (599 aa).

An NADH dehydrogenase I subunit C region spans residues 1–190 (MMIDQIAQES…DPFELTRQKE (190 aa)). Residues 214-599 (DFMFLNLGPN…IDFVMSDVDR (386 aa)) form an NADH dehydrogenase I subunit D region.

This sequence in the N-terminal section; belongs to the complex I 30 kDa subunit family. It in the C-terminal section; belongs to the complex I 49 kDa subunit family. NDH-1 is composed of 13 different subunits. Subunits NuoB, CD, E, F, and G constitute the peripheral sector of the complex.

It is found in the cell inner membrane. The catalysed reaction is a quinone + NADH + 5 H(+)(in) = a quinol + NAD(+) + 4 H(+)(out). NDH-1 shuttles electrons from NADH, via FMN and iron-sulfur (Fe-S) centers, to quinones in the respiratory chain. The immediate electron acceptor for the enzyme in this species is believed to be ubiquinone. Couples the redox reaction to proton translocation (for every two electrons transferred, four hydrogen ions are translocated across the cytoplasmic membrane), and thus conserves the redox energy in a proton gradient. The protein is NADH-quinone oxidoreductase subunit C/D of Photorhabdus laumondii subsp. laumondii (strain DSM 15139 / CIP 105565 / TT01) (Photorhabdus luminescens subsp. laumondii).